Consider the following 123-residue polypeptide: UPF0102 protein VSAL_I2655 (123 aa).

The protein belongs to the UPF0102 family.

The protein is UPF0102 protein VSAL_I2655 of Aliivibrio salmonicida (strain LFI1238) (Vibrio salmonicida (strain LFI1238)).